Here is a 148-residue protein sequence, read N- to C-terminus: Calmodulin (148 aa).

Ala-2 bears the N-acetylalanine mark. EF-hand domains lie at Asp-8–Asn-43, Pro-44–Asp-79, Asp-81–Lys-116, and Lys-116–Lys-148. Positions 21, 23, 25, 27, 32, 57, 59, 61, 63, 68, 94, 96, 98, and 105 each coordinate Ca(2+). Lys-116 carries the post-translational modification N6,N6,N6-trimethyllysine. Residues Asp-129, Asp-131, Asp-133, Gln-135, and Glu-140 each coordinate Ca(2+).

Belongs to the calmodulin family.

Its function is as follows. Calmodulin mediates the control of a large number of enzymes, ion channels and other proteins by Ca(2+). Among the enzymes to be stimulated by the calmodulin-Ca(2+) complex are a number of protein kinases and phosphatases. This is Calmodulin (CAMF1) from Fagus sylvatica (Beechnut).